The following is a 39-amino-acid chain: Conotoxin Cl14.5 (39 aa).

A propeptide spanning residues 1 to 16 is cleaved from the precursor; that stretch reads PVNEAGVERLFRALVG. Residue Pro38 is modified to Proline amide.

Contains 2 disulfide bonds. As to expression, expressed by the venom duct.

It is found in the secreted. This is Conotoxin Cl14.5 from Californiconus californicus (California cone).